The following is a 150-amino-acid chain: Natriuretic peptides A (150 aa).

Residues 1-24 (MSSFTITVSFLLVLVFQFPGQTRA) form the signal peptide. 2 consecutive propeptides follow at residues 25–122 (NPVY…AAPR) and 92–102 (DGGALGRGPWD). Positions 77–100 (LEVPPWTGEVNPAQRDGGALGRGP) are disordered. A Phosphoserine modification is found at Ser-128. The cysteines at positions 129 and 145 are disulfide-linked.

Belongs to the natriuretic peptide family. As to quaternary structure, homodimer; disulfide-linked antiparallel dimer. In terms of processing, the precursor molecule is proteolytically cleaved by CORIN at Arg-122 to produce the atrial natriuretic peptide. Undergoes further proteolytic cleavage by unknown proteases to give rise to long-acting natriuretic peptide, vessel dilator and kaliuretic peptide. Additional processing gives rise to the auriculin and atriopeptin peptides. In the kidneys, alternative processing by an unknown protease results in the peptide urodilatin. Cleavage by MME initiates degradation of the factor and thereby regulates its activity. Degradation by IDE results in reduced activation of NPR1 (in vitro). During IDE degradation, the resulting products can temporarily stimulate NPR2 to produce cGMP, before the fragments are completely degraded and inactivated by IDE (in vitro). Post-translationally, degraded by IDE. In terms of processing, phosphorylation on Ser-128 decreases vasorelaxant activity. As to expression, brain (at protein level).

Its subcellular location is the secreted. The protein resides in the perikaryon. It is found in the cell projection. Hormone that plays a key role in mediating cardio-renal homeostasis, and is involved in vascular remodeling and regulating energy metabolism. Acts by specifically binding and stimulating NPR1 to produce cGMP, which in turn activates effector proteins, such as PRKG1, that drive various biological responses. Regulates vasodilation, natriuresis, diuresis and aldosterone synthesis and is therefore essential for regulating blood pressure, controlling the extracellular fluid volume and maintaining the fluid-electrolyte balance. Also involved in inhibiting cardiac remodeling and cardiac hypertrophy by inducing cardiomyocyte apoptosis and attenuating the growth of cardiomyocytes and fibroblasts. Plays a role in female pregnancy by promoting trophoblast invasion and spiral artery remodeling in uterus, and thus prevents pregnancy-induced hypertension. In adipose tissue, acts in various cGMP- and PKG-dependent pathways to regulate lipid metabolism and energy homeostasis. This includes up-regulating lipid metabolism and mitochondrial oxygen utilization by activating the AMP-activated protein kinase (AMPK), and increasing energy expenditure by acting via MAPK11 to promote the UCP1-dependent thermogenesis of brown adipose tissue. Binds the clearance receptor NPR3 which removes the hormone from circulation. Its function is as follows. May have a role in cardio-renal homeostasis through regulation of natriuresis, diuresis, vasodilation, and inhibiting aldosterone synthesis. In vitro, promotes the production of cGMP and induces vasodilation. May promote natriuresis, at least in part, by enhancing prostaglandin E2 synthesis resulting in the inhibition of renal Na+-K+-ATPase. However reports on the involvement of this peptide in mammal blood volume and blood pressure homeostasis are conflicting; according to a report, in vivo it is not sufficient to activate cGMP and does not inhibit collecting duct transport nor effect diuresis and natriuresis. Appears to bind to specific receptors that are distinct from the receptors bound by atrial natriuretic peptide and vessel dilator. Possibly enhances protein excretion in urine by decreasing proximal tubular protein reabsorption. Functionally, may have a role in cardio-renal homeostasis through regulation of natriuresis, diuresis, and vasodilation. In vitro, promotes the production of cGMP and induces vasodilation. May promote natriuresis, at least in part, by enhancing prostaglandin E2 synthesis resulting in the inhibition of renal Na+-K+-ATPase. However reports on the involvement of this peptide in mammal blood volume and blood pressure homeostasis are conflicting; according to a report it is not sufficient to activate cGMP and does not inhibit collecting duct transport nor effect diuresis and natriuresis. Appears to bind to specific receptors that are distinct from the receptors bound by the atrial natriuretic and long-acting natriuretic peptides. Possibly functions in protein excretion in urine by maintaining the integrity of the proximal tubules and enhancing protein excretion by decreasing proximal tubular protein reabsorption. In terms of biological role, may have a role in cardio-renal homeostasis through regulation of diuresis and inhibiting aldosterone synthesis. In vitro, promotes the production of cGMP and induces vasodilation. May promote natriuresis, at least in part, by enhancing prostaglandin E2 synthesis resulting in the inhibition of renal Na+-K+-ATPase. May have a role in potassium excretion but not sodium excretion (natriuresis). Possibly enhances protein excretion in urine by decreasing proximal tubular protein reabsorption. Hormone produced in the kidneys that appears to be important for maintaining cardio-renal homeostasis. Mediates vasodilation, natriuresis and diuresis primarily in the renal system, in order to maintain the extracellular fluid volume and control the fluid-electrolyte balance. Specifically binds and stimulates cGMP production by renal transmembrane receptors, likely NPR1. Urodilatin not ANP, may be the natriuretic peptide responsible for the regulation of sodium and water homeostasis in the kidney. Its function is as follows. May have a role in cardio-renal homeostasis through regulation of natriuresis and vasodilation. In vivo promotes natriuresis and in vitro, vasodilates renal artery strips. Functionally, may have a role in cardio-renal homeostasis through regulation of regulation of natriuresis and vasodilation. In vivo promotes natriuresis. In vitro, vasodilates intestinal smooth muscle but not smooth muscle strips. In terms of biological role, may have a role in cardio-renal homeostasis through regulation of natriuresis and vasodilation. In vivo promotes natriuresis. In vitro, selectively vasodilates intestinal and vascular smooth muscle strips. May have a role in cardio-renal homeostasis through regulation of natriuresis and vasodilation. In vivo promotes natriuresis. In vitro, selectively vasodilates intestinal smooth muscle but not vascular smooth muscle strips. The chain is Natriuretic peptides A (NPPA) from Sus scrofa (Pig).